The sequence spans 212 residues: Thiamine-phosphate synthase (212 aa).

Residues 39–43 and Asn-71 contribute to the 4-amino-2-methyl-5-(diphosphooxymethyl)pyrimidine site; that span reads QLREK. Positions 72 and 91 each coordinate Mg(2+). A 4-amino-2-methyl-5-(diphosphooxymethyl)pyrimidine-binding site is contributed by Ser-110. Residue 137 to 139 coordinates 2-[(2R,5Z)-2-carboxy-4-methylthiazol-5(2H)-ylidene]ethyl phosphate; that stretch reads TPT. Lys-140 contributes to the 4-amino-2-methyl-5-(diphosphooxymethyl)pyrimidine binding site. Gly-168 provides a ligand contact to 2-[(2R,5Z)-2-carboxy-4-methylthiazol-5(2H)-ylidene]ethyl phosphate.

The protein belongs to the thiamine-phosphate synthase family. The cofactor is Mg(2+).

It carries out the reaction 2-[(2R,5Z)-2-carboxy-4-methylthiazol-5(2H)-ylidene]ethyl phosphate + 4-amino-2-methyl-5-(diphosphooxymethyl)pyrimidine + 2 H(+) = thiamine phosphate + CO2 + diphosphate. The catalysed reaction is 2-(2-carboxy-4-methylthiazol-5-yl)ethyl phosphate + 4-amino-2-methyl-5-(diphosphooxymethyl)pyrimidine + 2 H(+) = thiamine phosphate + CO2 + diphosphate. It catalyses the reaction 4-methyl-5-(2-phosphooxyethyl)-thiazole + 4-amino-2-methyl-5-(diphosphooxymethyl)pyrimidine + H(+) = thiamine phosphate + diphosphate. Its pathway is cofactor biosynthesis; thiamine diphosphate biosynthesis; thiamine phosphate from 4-amino-2-methyl-5-diphosphomethylpyrimidine and 4-methyl-5-(2-phosphoethyl)-thiazole: step 1/1. Its function is as follows. Condenses 4-methyl-5-(beta-hydroxyethyl)thiazole monophosphate (THZ-P) and 2-methyl-4-amino-5-hydroxymethyl pyrimidine pyrophosphate (HMP-PP) to form thiamine monophosphate (TMP). This is Thiamine-phosphate synthase from Acidothermus cellulolyticus (strain ATCC 43068 / DSM 8971 / 11B).